A 91-amino-acid polypeptide reads, in one-letter code: Large ribosomal subunit protein bL27 (91 aa).

The interval M1–R25 is disordered.

Belongs to the bacterial ribosomal protein bL27 family.

The protein is Large ribosomal subunit protein bL27 of Corynebacterium kroppenstedtii (strain DSM 44385 / JCM 11950 / CIP 105744 / CCUG 35717).